Here is a 400-residue protein sequence, read N- to C-terminus: Transmembrane protein 43 (400 aa).

An N-acetylalanine modification is found at A2. At 2–31 the chain is on the nuclear side; it reads AANYSSTSSRKEHVKVTSEPQPGFLERLSE. The helical transmembrane segment at 32–52 threads the bilayer; the sequence is TSGGMFVGLMTFLLSFYLIFT. The Perinuclear space segment spans residues 53–313; the sequence is NEGRALKTAT…NSMKTWGLRA (261 aa). The chain crosses the membrane as a helical span at residues 314–334; it reads AGWMAMFMGLNLMTRILYTLV. Topologically, residues 335–345 are nuclear; the sequence is DWFPVFRDLVN. A helical transmembrane segment spans residues 346 to 366; sequence IGLKAFAFCVATSLTLLTVAA. The Perinuclear space portion of the chain corresponds to 367-368; sequence GW. A helical membrane pass occupies residues 369–389; sequence LFYRPLWAALIGCLALVPIII. Residues 390–400 are Nuclear-facing; it reads ARTRVPAKKLE.

The protein belongs to the TMEM43 family. Can form oligomers through the transmembrane domains. Interacts with EMD; the interaction retains EMD at the inner nuclear membrane. Interacts with LMNA and LMNB2. Interacts with SUN2. Interacts with RNF26; this interaction is important to modulate innate immune signaling through the cGAS-STING pathway. Interacts with CARD10. Interacts with gap junctions proteins GJB2/Cx26 and GJB4/Cx30. In terms of tissue distribution, widely expressed, including in the cochlea, heart, eye, brain and kidney.

The protein resides in the endoplasmic reticulum membrane. The protein localises to the nucleus inner membrane. It localises to the cell membrane. In terms of biological role, may have an important role in maintaining nuclear envelope structure by organizing protein complexes at the inner nuclear membrane. Required for retaining emerin at the inner nuclear membrane. Plays a role in the modulation of innate immune signaling through the cGAS-STING pathway by interacting with RNF26. In addition, functions as a critical signaling component in mediating NF-kappa-B activation by acting downstream of EGFR and upstream of CARD10. Contributes to passive conductance current in cochlear glia-like supporting cells, mediated by gap junctions and necessary for hearing. In Mus musculus (Mouse), this protein is Transmembrane protein 43 (Tmem43).